A 900-amino-acid chain; its full sequence is Serine-rich coiled-coil domain-containing protein 1 (900 aa).

Disordered regions lie at residues 1 to 100 (MGDS…HSNM) and 156 to 178 (KSEGDDSGFTEDQTRRSVKQSTR). Positions 29–56 (LPSSPSSSNTVGVHSSSPSSTNSSSGST) are enriched in low complexity. Residues 81-100 (EPTNQNLSISNGAQPGHSNM) are compositionally biased toward polar residues. A coiled-coil region spans residues 673 to 707 (MKDECSMLKLQLKEKDELISQLQEELGKVRHLQKA).

The protein belongs to the CCSER family.

The chain is Serine-rich coiled-coil domain-containing protein 1 (CCSER1) from Homo sapiens (Human).